The following is a 317-amino-acid chain: Metaxin-1 (317 aa).

Residues Lys-38, Lys-41, and Lys-78 each participate in a glycyl lysine isopeptide (Lys-Gly) (interchain with G-Cter in ubiquitin) cross-link. Residues 164–184 (EELEKELYREARECLTLLSQR) traverse the membrane as a helical segment.

It belongs to the metaxin family. Interacts with MTX2/metaxin-2. Associates with the mitochondrial contact site and cristae organizing system (MICOS) complex, composed of at least MICOS10/MIC10, CHCHD3/MIC19, CHCHD6/MIC25, APOOL/MIC27, IMMT/MIC60, APOO/MIC23/MIC26 and QIL1/MIC13. This complex was also known under the names MINOS or MitOS complex. The MICOS complex associates with mitochondrial outer membrane proteins SAMM50, MTX1 and MTX2 (together described as components of the mitochondrial outer membrane sorting assembly machinery (SAM) complex) and DNAJC11, mitochondrial inner membrane protein TMEM11 and with HSPA9. The MICOS and SAM complexes together with DNAJC11 are part of a large protein complex spanning both membranes termed the mitochondrial intermembrane space bridging (MIB) complex. Interacts with ARMC1. In terms of processing, ubiquitinated by PRKN during mitophagy, leading to its degradation and enhancement of mitophagy. Deubiquitinated by USP30.

It localises to the mitochondrion outer membrane. In terms of biological role, involved in transport of proteins into the mitochondrion. Essential for embryonic development. The chain is Metaxin-1 (MTX1) from Macaca fascicularis (Crab-eating macaque).